Reading from the N-terminus, the 115-residue chain is Insulin (115 aa).

Positions 1–22 (MAALWLQSVSLLVLMLVSWSGS) are cleaved as a signal peptide. 3 disulfides stabilise this stretch: cysteine 32-cysteine 101, cysteine 44-cysteine 114, and cysteine 100-cysteine 105. A propeptide spans 56-92 (DVDPLLGFLPAKSGGAAAGGENEVAEFAFKDQMEMMV) (c peptide).

This sequence belongs to the insulin family. As to quaternary structure, heterodimer of a B chain and an A chain linked by two disulfide bonds.

Its subcellular location is the secreted. In terms of biological role, insulin decreases blood glucose concentration. It increases cell permeability to monosaccharides, amino acids and fatty acids. It accelerates glycolysis, the pentose phosphate cycle, and glycogen synthesis in liver. The chain is Insulin (ins) from Verasper moseri (Barfin flounder).